The chain runs to 386 residues: ATP phosphoribosyltransferase regulatory subunit (386 aa).

This sequence belongs to the class-II aminoacyl-tRNA synthetase family. HisZ subfamily. In terms of assembly, heteromultimer composed of HisG and HisZ subunits.

Its subcellular location is the cytoplasm. Its pathway is amino-acid biosynthesis; L-histidine biosynthesis; L-histidine from 5-phospho-alpha-D-ribose 1-diphosphate: step 1/9. Its function is as follows. Required for the first step of histidine biosynthesis. May allow the feedback regulation of ATP phosphoribosyltransferase activity by histidine. In Limosilactobacillus fermentum (strain NBRC 3956 / LMG 18251) (Lactobacillus fermentum), this protein is ATP phosphoribosyltransferase regulatory subunit.